Consider the following 572-residue polypeptide: EF-hand calcium-binding domain-containing protein 12 (572 aa).

Disordered regions lie at residues 62-85 (VPRKEDQTPLNPASQPQAPPKPIP) and 146-169 (EQSAQPNASQATTRTTRKKAPRLS). The region spanning 196–231 (SRKIKILEIFHKVGQGENQRITREEFIAAVKAVGVP) is the EF-hand domain. Glu212 contacts Ca(2+).

The chain is EF-hand calcium-binding domain-containing protein 12 (EFCAB12) from Homo sapiens (Human).